A 129-amino-acid polypeptide reads, in one-letter code: Dormancy-associated protein 2 (129 aa).

The signal sequence occupies residues 1–25 (MDSRKAMLILGLLAMVLLISSEVSA). Residues 110 to 129 (GGYHGGGGHGGHGGASNNGN) are disordered.

The protein belongs to the DRM1/ARP family. In terms of tissue distribution, expressed in axilary buds. Detected in growing stems, leaflets and floral organs, but not in roots.

In Pisum sativum (Garden pea), this protein is Dormancy-associated protein 2.